The following is a 557-amino-acid chain: Aerobic glycerol-3-phosphate dehydrogenase (557 aa).

FAD is bound at residue 21-49 (DLVIIGGGITGAGIALDASERGMKVALVE).

This sequence belongs to the FAD-dependent glycerol-3-phosphate dehydrogenase family. The cofactor is FAD.

The protein localises to the cytoplasm. The enzyme catalyses a quinone + sn-glycerol 3-phosphate = dihydroxyacetone phosphate + a quinol. Its pathway is polyol metabolism; glycerol degradation via glycerol kinase pathway; glycerone phosphate from sn-glycerol 3-phosphate (aerobic route): step 1/1. The protein is Aerobic glycerol-3-phosphate dehydrogenase (glpD) of Staphylococcus aureus (strain bovine RF122 / ET3-1).